A 450-amino-acid chain; its full sequence is NADH-quinone oxidoreductase subunit H (450 aa).

Helical transmembrane passes span 18-38 (WWLV…TPLL), 91-111 (ILAP…IPFG), 128-148 (LPVA…GIVL), 169-189 (VISY…DAGT), 201-221 (HTWY…SMVG), 262-282 (VTVS…PFPL), 292-312 (WWPV…FVWL), 324-344 (FMGL…MIVA), and 358-378 (SIAL…LLWK). Residues 387 to 450 (APEKPVEPRG…TGPTQENSDD (64 aa)) are disordered. A compositionally biased stretch (basic and acidic residues) spans 390–400 (KPVEPRGRAEL). Over residues 433–450 (VSVTGAHSTGPTQENSDD) the composition is skewed to polar residues.

It belongs to the complex I subunit 1 family. NDH-1 is composed of 14 different subunits. Subunits NuoA, H, J, K, L, M, N constitute the membrane sector of the complex.

The protein localises to the cell membrane. It catalyses the reaction a quinone + NADH + 5 H(+)(in) = a quinol + NAD(+) + 4 H(+)(out). In terms of biological role, NDH-1 shuttles electrons from NADH, via FMN and iron-sulfur (Fe-S) centers, to quinones in the respiratory chain. The immediate electron acceptor for the enzyme in this species is believed to be ubiquinone. Couples the redox reaction to proton translocation (for every two electrons transferred, four hydrogen ions are translocated across the cytoplasmic membrane), and thus conserves the redox energy in a proton gradient. This subunit may bind ubiquinone. The chain is NADH-quinone oxidoreductase subunit H from Rhodococcus jostii (strain RHA1).